The primary structure comprises 726 residues: Pyrroloquinoline quinone-dependent pyranose dehydrogenase (726 aa).

The first 18 residues, 1-18 (MRSSSLAWALGLVALANA), serve as a signal peptide directing secretion. The heme b site is built by methionine 83 and tyrosine 108. The cysteines at positions 138 and 141 are disulfide-linked. Asparagine 140 is a glycosylation site (N-linked (GlcNAc...) asparagine). The heme b site is built by arginine 181 and histidine 182. A disordered region spans residues 211–242 (PPLSGGAPTQPPTQQPPTTTAPPPPPPSSTFV). Residues 219 to 238 (TQPPTQQPPTTTAPPPPPPS) are compositionally biased toward pro residues. An intrachain disulfide couples cysteine 244 to cysteine 302. Positions 273, 363, 430, and 431 each coordinate pyrroloquinoline quinone. Ca(2+) contacts are provided by serine 449 and aspartate 451. A disulfide bridge connects residues cysteine 492 and cysteine 525. Pyrroloquinoline quinone is bound at residue histidine 539. An N-linked (GlcNAc...) asparagine glycan is attached at asparagine 551. The pyrroloquinoline quinone site is built by histidine 560, tryptophan 563, and asparagine 564. A disulfide bridge connects residues cysteine 611 and cysteine 619. Residue arginine 621 participates in pyrroloquinoline quinone binding. The segment covering 659–678 (ITQPPITTSPPTPTTPPVVQ) has biased composition (pro residues). The interval 659–689 (ITQPPITTSPPTPTTPPVVQPPTTVAPPQAS) is disordered. The span at 679–689 (PPTTVAPPQAS) shows a compositional bias: low complexity. One can recognise a CBM1 domain in the interval 688-724 (ASQTLWGQCGGQGWTGPTLCPANSVCRESNQWYSQCV).

This sequence belongs to the sugar dehydrogenase AA12 family. Requires Ca(2+) as cofactor. Pyrroloquinoline quinone is required as a cofactor. The cofactor is heme b.

It is found in the secreted. Functionally, pyrroloquinoline quinone (PPQ)-dependent oxidoreductase that catalyzes the oxidation of various sugars including L-galactose, L-gulose, D-talose, D-arabinose, D-lyxose, L-fucose and D-glucosone. Shows significant activity toward the reverse-chair conformation of pyranoses. Shows little or no activity toward abundant sugars such as D-glucose, D-fructose, cellobiose, as well L-xylose and L-glucose. This enzyme is able to direct electrical communication with electrodes, without artificial electron mediators, thus allowing direct electron transfer (DET)-type bioelectrocatalysis. Exhibits binding affinity for insoluble cellulose. PDH does not oxidize cello-oligosaccharides but is able to activate the C-1-oxidizing Neurospora crassa LPMO9F and the C-4-oxidizing Neurospora crassa LPMO9C thanks to the electron-tranfer activity of the cytochrome domain and the localization of PDH in the vicinity of the LPMO substrates by the CBM1 domain. This Coprinopsis cinerea (strain Okayama-7 / 130 / ATCC MYA-4618 / FGSC 9003) (Inky cap fungus) protein is Pyrroloquinoline quinone-dependent pyranose dehydrogenase.